The chain runs to 363 residues: Protein RecA (363 aa).

Position 78 to 85 (78 to 85 (GPESGGKT)) interacts with ATP.

Belongs to the RecA family.

It is found in the cytoplasm. Its function is as follows. Can catalyze the hydrolysis of ATP in the presence of single-stranded DNA, the ATP-dependent uptake of single-stranded DNA by duplex DNA, and the ATP-dependent hybridization of homologous single-stranded DNAs. It interacts with LexA causing its activation and leading to its autocatalytic cleavage. Probably involved in base excision repair. In terms of biological role, following severe irradiation (7 kGy of gamma irradiation) genomic DNA is fragmented. DNA is progressively degraded for the first 1.5 hours after IR, in a step promoted by RecA and counterbalanced by DNA Pol I and Pol III, followed by massive DNA synthesis and genome reassembly in the next hour. Optimal priming of DNA synthesis requires both RecA and RadA, Pol III initiates DNA synthesis while both Pol I and Pol III are required for its continuation. In the absence of RecA the majority of the chromosome is still reconstituted, via either single-strand annealing or non-homologous end joining. The polypeptide is Protein RecA (Deinococcus radiodurans (strain ATCC 13939 / DSM 20539 / JCM 16871 / CCUG 27074 / LMG 4051 / NBRC 15346 / NCIMB 9279 / VKM B-1422 / R1)).